Reading from the N-terminus, the 983-residue chain is Inner tegument protein (983 aa).

An interaction with large tegument protein region spans residues 474 to 983 (LNVNTHFAVQ…TSVSLPPASP (510 aa)). A disordered region spans residues 901-932 (APWESAPQPPRLRMTPDTDHEESTAGATSVPE). Over residues 914–923 (MTPDTDHEES) the composition is skewed to basic and acidic residues.

The protein belongs to the herpesviridae inner tegument protein family. As to quaternary structure, interacts (via C-terminus) with the large tegument protein/LTP (via N-terminus).

The protein localises to the virion tegument. Its subcellular location is the host cytoplasm. It is found in the host nucleus. The protein resides in the host Golgi apparatus. It localises to the host trans-Golgi network. Its function is as follows. Plays an essential role in cytoplasmic secondary envelopment during viral egress. Interacts with the capsid via the large tegument protein/LTP and participates in its transport to the host trans-Golgi network (TGN) where secondary envelopment occurs. Modulates tegumentation and capsid accumulation at the viral assembly complex. The chain is Inner tegument protein (UL47) from Homo sapiens (Human).